Consider the following 201-residue polypeptide: Small ribosomal subunit protein uS4 (201 aa).

The disordered stretch occupies residues 26 to 46 (LARRAYAPGDHGRDRRGKLSE). Residues 35–44 (DHGRDRRGKL) are compositionally biased toward basic and acidic residues. Positions 93–156 (RRLDNMVYRL…KNLDIIKNAV (64 aa)) constitute an S4 RNA-binding domain.

This sequence belongs to the universal ribosomal protein uS4 family. Part of the 30S ribosomal subunit. Contacts protein S5. The interaction surface between S4 and S5 is involved in control of translational fidelity.

Functionally, one of the primary rRNA binding proteins, it binds directly to 16S rRNA where it nucleates assembly of the body of the 30S subunit. With S5 and S12 plays an important role in translational accuracy. The polypeptide is Small ribosomal subunit protein uS4 (Limosilactobacillus reuteri (strain DSM 20016) (Lactobacillus reuteri)).